Consider the following 317-residue polypeptide: Zinc finger protein 771 (317 aa).

The segment covering 1–17 (MPGEQQAEEEEEEEMQE) has biased composition (acidic residues). The tract at residues 1-63 (MPGEQQAEEE…APSADPARPH (63 aa)) is disordered. K33 participates in a covalent cross-link: Glycyl lysine isopeptide (Lys-Gly) (interchain with G-Cter in SUMO2). Residues 33-49 (KYEVVKLKIPMDNKEVP) show a composition bias toward basic and acidic residues. C2H2-type zinc fingers lie at residues 63–85 (HACP…ARTH), 91–113 (FGCT…GRTH), 119–141 (YECP…RRRH), 147–169 (YACA…LRVH), 175–197 (YACP…RRTH), 203–225 (YACA…RRVH), 231–253 (HRCA…ARTH), and 259–281 (YPCA…RRAH).

Belongs to the krueppel C2H2-type zinc-finger protein family.

The protein localises to the nucleus. May be involved in transcriptional regulation. This chain is Zinc finger protein 771 (ZNF771), found in Homo sapiens (Human).